A 152-amino-acid polypeptide reads, in one-letter code: Deoxyuridine 5'-triphosphate nucleotidohydrolase (152 aa).

Residues 71–73 (RSG), asparagine 84, and 88–90 (LID) contribute to the substrate site.

It belongs to the dUTPase family. Requires Mg(2+) as cofactor.

The enzyme catalyses dUTP + H2O = dUMP + diphosphate + H(+). Its pathway is pyrimidine metabolism; dUMP biosynthesis; dUMP from dCTP (dUTP route): step 2/2. Functionally, this enzyme is involved in nucleotide metabolism: it produces dUMP, the immediate precursor of thymidine nucleotides and it decreases the intracellular concentration of dUTP so that uracil cannot be incorporated into DNA. The protein is Deoxyuridine 5'-triphosphate nucleotidohydrolase of Xanthomonas campestris pv. campestris (strain 8004).